The chain runs to 774 residues: MRGPIVLHICLAFCSLLLFSVATQCLAFPKIERRREIAHVHAEKGQSDKMNTDDLENSSVTSKQTPQLVVSEDPMMMSAVPSATSLNKAFSINKETQPGQAGLMQTERPGVSTPTESGVPSAEEVFGSSQPERISPESGLAKAMLTIAITATPSLTVDEKEELLTSTNFQPIVEEITETTKGFLKYMDNQSFATESQEGVGLGHSPSSYVNTKEMLTTNPKTEKFEADTDHRTTSFPGAESTAGSEPGSLTPDKEKPSQMTADNTQAAATKQPLETSEYTLSVEPETDSLLGAPEVTVSVSTAVPAASALSDEWDDTKLESVSRIRTPKLGDNEETQVRTEMSQTAQVSHEGMEGGQPWTEAAQVALGLPEGETHTGTALLIAHGNERSPAFTDQSSFTPTSLMEDMKVSIVNLLQSTGDFTESTKENDALFFLETTVSVSVYESEADQLLGNTMKDIITQEMTTAVQEPDATLSMVTQEQVATLELIRDSGKTEEEKEDPSPVSDVPGVTQLSRRWEPLATTISTTVVPLSFEVTPTVEEQMDTVTGPNEEFTPVLGSPVTPPGIMVGEPSISPALPALEASSERRTVVPSITRVNTAASYGLDQLESEEGQEDEDEEDEEDEDEEEEDEEEDEEDKDADSLDEGLDGDTELPGFTLPGITSQEPGLEEGNMDLLEGATYQVPDALEWEQQNQGLVRSWMEKLKDKAGYMSGMLVPVGVGIAGALFILGALYSIKVMNRRRRNGFKRHKRKQREFNSMQDRVMLLADSSEDEF.

The first 27 residues, 1–27 (MRGPIVLHICLAFCSLLLFSVATQCLA), serve as a signal peptide directing secretion. Residues 28–714 (FPKIERRREI…KDKAGYMSGM (687 aa)) are Extracellular-facing. The span at 41 to 52 (HAEKGQSDKMNT) shows a compositional bias: basic and acidic residues. Disordered stretches follow at residues 41–63 (HAEK…VTSK) and 97–135 (QPGQ…ERIS). Residue Asn57 is glycosylated (N-linked (GlcNAc...) asparagine). N-linked (GlcNAc...) asparagine glycosylation occurs at Asn189. A compositionally biased stretch (basic and acidic residues) spans 221–233 (KTEKFEADTDHRT). 2 disordered regions span residues 221 to 275 (KTEK…QPLE) and 600 to 669 (ASYG…PGLE). Residues 258–275 (SQMTADNTQAAATKQPLE) show a composition bias toward polar residues. Acidic residues predominate over residues 607–651 (LESEEGQEDEDEEDEEDEDEEEEDEEEDEEDKDADSLDEGLDGDT). The chain crosses the membrane as a helical span at residues 715 to 735 (LVPVGVGIAGALFILGALYSI). Topologically, residues 736 to 774 (KVMNRRRRNGFKRHKRKQREFNSMQDRVMLLADSSEDEF) are cytoplasmic. Phosphoserine occurs at positions 769 and 770.

In terms of assembly, interacts with IL6ST; this interaction prevents IL6ST protein homodimerization and bridges ARMH4 with IL6R and STAT3 and therefore inhibits phosphorylation of STAT3 at 'Tyr-705'. Interacts (via cytoplasmic tail) with RICTOR; this interaction bridges ARMH4 to the mTORC2 complex and inhibits the mTORC2 kinase activity. As to expression, expressed in podocytes.

It localises to the membrane. Functionally, may modulate immune response and may play a role in inflammation. Down-modulates STAT3 signaling throught direct interaction with IL6ST, resulting in the inhibition of phosphorylation of STAT3 at 'Tyr-705'. May negatively regulates AKT signaling by modulating the activity of mTORC2 complex through RICTOR interaction. In Homo sapiens (Human), this protein is Armadillo-like helical domain-containing protein 4.